The following is a 115-amino-acid chain: Large ribosomal subunit protein bL19 (115 aa).

This sequence belongs to the bacterial ribosomal protein bL19 family.

In terms of biological role, this protein is located at the 30S-50S ribosomal subunit interface and may play a role in the structure and function of the aminoacyl-tRNA binding site. The sequence is that of Large ribosomal subunit protein bL19 from Baumannia cicadellinicola subsp. Homalodisca coagulata.